The primary structure comprises 65 residues: Large ribosomal subunit protein bL35 (65 aa).

It belongs to the bacterial ribosomal protein bL35 family.

This Prochlorococcus marinus (strain MIT 9215) protein is Large ribosomal subunit protein bL35.